The chain runs to 123 residues: Ribosome-binding factor A (123 aa).

Belongs to the RbfA family. In terms of assembly, monomer. Binds 30S ribosomal subunits, but not 50S ribosomal subunits or 70S ribosomes.

The protein resides in the cytoplasm. One of several proteins that assist in the late maturation steps of the functional core of the 30S ribosomal subunit. Associates with free 30S ribosomal subunits (but not with 30S subunits that are part of 70S ribosomes or polysomes). Required for efficient processing of 16S rRNA. May interact with the 5'-terminal helix region of 16S rRNA. The polypeptide is Ribosome-binding factor A (Variovorax paradoxus (strain S110)).